Here is a 362-residue protein sequence, read N- to C-terminus: Flotillin-like protein FloA 2 (362 aa).

Residues 24-44 traverse the membrane as a helical segment; the sequence is TALLIGALVIFAGIVVVLFIF.

Belongs to the flotillin-like FloA family. As to quaternary structure, homooligomerizes.

It localises to the cell membrane. It is found in the membrane raft. Its function is as follows. Found in functional membrane microdomains (FMM) that may be equivalent to eukaryotic membrane rafts. FMMs are highly dynamic and increase in number as cells age. Flotillins are thought to be important factors in membrane fluidity. In Rhodopirellula baltica (strain DSM 10527 / NCIMB 13988 / SH1), this protein is Flotillin-like protein FloA 2.